Consider the following 513-residue polypeptide: Nitrate transporter 2.2 (513 aa).

A run of 12 helical transmembrane segments spans residues 38-58, 74-94, 98-118, 128-148, 158-178, 196-216, 247-265, 281-301, 323-343, 351-371, 383-403, and 419-439; these read WICF…APVI, VSAV…VDVV, YGAA…ALVT, FFIG…GTMF, AIAA…MPLI, AFFV…LLGI, LGNY…SFGV, FGLN…MNIF, LWVL…MGKV, IVIM…HFGI, VSGL…AIWF, and FVWM…IWFP.

The protein belongs to the major facilitator superfamily. Nitrate/nitrite porter (TC 2.A.1.8) family.

The protein resides in the cell membrane. Functionally, involved in nitrate transport, but does not seem to be able to mediate transport by its own. Acts as a dual component transporter with NAR2 (system 2). Involved in a high affinity transport specific for nitrate. This is Nitrate transporter 2.2 from Chlamydomonas reinhardtii (Chlamydomonas smithii).